The following is a 490-amino-acid chain: Cytochrome P450 2C12, female-specific (490 aa).

Cys-435 is a heme binding site.

Belongs to the cytochrome P450 family. Requires heme as cofactor.

The protein resides in the endoplasmic reticulum membrane. Its subcellular location is the microsome membrane. It catalyses the reaction an organic molecule + reduced [NADPH--hemoprotein reductase] + O2 = an alcohol + oxidized [NADPH--hemoprotein reductase] + H2O + H(+). Functionally, this P450 is active in 15-beta-hydroxylation of steroid sulfates. The chain is Cytochrome P450 2C12, female-specific (Cyp2c12) from Rattus norvegicus (Rat).